Here is a 377-residue protein sequence, read N- to C-terminus: Queuine tRNA-ribosyltransferase (377 aa).

The active-site Proton acceptor is the Asp-89. Substrate contacts are provided by residues Asp-89 to Phe-93, Asp-143, Gln-188, and Gly-215. The interval Gly-246 to Asp-252 is RNA binding. The Nucleophile role is filled by Asp-265. An RNA binding; important for wobble base 34 recognition region spans residues Thr-270–Arg-274. Zn(2+) contacts are provided by Cys-303, Cys-305, Cys-308, and His-334.

The protein belongs to the queuine tRNA-ribosyltransferase family. Homodimer. Within each dimer, one monomer is responsible for RNA recognition and catalysis, while the other monomer binds to the replacement base PreQ1. Zn(2+) serves as cofactor.

It catalyses the reaction 7-aminomethyl-7-carbaguanine + guanosine(34) in tRNA = 7-aminomethyl-7-carbaguanosine(34) in tRNA + guanine. It functions in the pathway tRNA modification; tRNA-queuosine biosynthesis. Its function is as follows. Catalyzes the base-exchange of a guanine (G) residue with the queuine precursor 7-aminomethyl-7-deazaguanine (PreQ1) at position 34 (anticodon wobble position) in tRNAs with GU(N) anticodons (tRNA-Asp, -Asn, -His and -Tyr). Catalysis occurs through a double-displacement mechanism. The nucleophile active site attacks the C1' of nucleotide 34 to detach the guanine base from the RNA, forming a covalent enzyme-RNA intermediate. The proton acceptor active site deprotonates the incoming PreQ1, allowing a nucleophilic attack on the C1' of the ribose to form the product. After dissociation, two additional enzymatic reactions on the tRNA convert PreQ1 to queuine (Q), resulting in the hypermodified nucleoside queuosine (7-(((4,5-cis-dihydroxy-2-cyclopenten-1-yl)amino)methyl)-7-deazaguanosine). This chain is Queuine tRNA-ribosyltransferase, found in Acinetobacter baumannii (strain AB307-0294).